The chain runs to 77 residues: U11-lycotoxin-Ls1d (77 aa).

Positions 1 to 20 (MKLIIFTGLVLFAIVSLIEA) are cleaved as a signal peptide. Positions 21-26 (EEESGR) are excised as a propeptide.

This sequence belongs to the neurotoxin 19 (CSTX) family. 10 (U11-Lctx) subfamily. Contains 4 disulfide bonds. Expressed by the venom gland.

The protein localises to the secreted. The sequence is that of U11-lycotoxin-Ls1d from Lycosa singoriensis (Wolf spider).